Here is a 161-residue protein sequence, read N- to C-terminus: Regulator of ribonuclease activity A (161 aa).

Belongs to the RraA family. As to quaternary structure, homotrimer. Binds to both RNA-binding sites in the C-terminal region of Rne and to RhlB.

It is found in the cytoplasm. Its function is as follows. Globally modulates RNA abundance by binding to RNase E (Rne) and regulating its endonucleolytic activity. Can modulate Rne action in a substrate-dependent manner by altering the composition of the degradosome. Modulates RNA-binding and helicase activities of the degradosome. This Enterobacter sp. (strain 638) protein is Regulator of ribonuclease activity A.